Consider the following 118-residue polypeptide: Small ribosomal subunit protein uS13 (118 aa).

Positions 94 to 118 (SLPLRGQRTKTNARTRKGPRKPIRK) are disordered.

It belongs to the universal ribosomal protein uS13 family. As to quaternary structure, part of the 30S ribosomal subunit. Forms a loose heterodimer with protein S19. Forms two bridges to the 50S subunit in the 70S ribosome.

Functionally, located at the top of the head of the 30S subunit, it contacts several helices of the 16S rRNA. In the 70S ribosome it contacts the 23S rRNA (bridge B1a) and protein L5 of the 50S subunit (bridge B1b), connecting the 2 subunits; these bridges are implicated in subunit movement. Contacts the tRNAs in the A and P-sites. The protein is Small ribosomal subunit protein uS13 of Shewanella violacea (strain JCM 10179 / CIP 106290 / LMG 19151 / DSS12).